The sequence spans 89 residues: Transcription elongation factor 1 homolog (89 aa).

The Zn(2+) site is built by Cys25, Cys28, Cys49, and Cys52.

Belongs to the ELOF1 family.

It is found in the nucleus. Functionally, transcription elongation factor implicated in the maintenance of proper chromatin structure in actively transcribed regions. This is Transcription elongation factor 1 homolog from Oryza sativa subsp. japonica (Rice).